The sequence spans 124 residues: Apolipoprotein C-IV (124 aa).

The signal sequence occupies residues 1-27 (MSLLRCRQQTLPSLCLSVLFLACFVAS).

This sequence belongs to the apolipoprotein C4 family.

Its subcellular location is the secreted. Functionally, may participate in lipoprotein metabolism. This is Apolipoprotein C-IV (Apoc4) from Rattus norvegicus (Rat).